A 909-amino-acid polypeptide reads, in one-letter code: Protein translocase subunit SecA (909 aa).

ATP-binding positions include glutamine 85, glycine 103 to threonine 107, and aspartate 512. Residues histidine 866 to lysine 899 are disordered. Cysteine 893, cysteine 895, cysteine 904, and cysteine 905 together coordinate Zn(2+).

This sequence belongs to the SecA family. In terms of assembly, monomer and homodimer. Part of the essential Sec protein translocation apparatus which comprises SecA, SecYEG and auxiliary proteins SecDF. Other proteins may also be involved. Zn(2+) serves as cofactor.

The protein localises to the cell membrane. Its subcellular location is the cytoplasm. The enzyme catalyses ATP + H2O + cellular proteinSide 1 = ADP + phosphate + cellular proteinSide 2.. Its function is as follows. Part of the Sec protein translocase complex. Interacts with the SecYEG preprotein conducting channel. Has a central role in coupling the hydrolysis of ATP to the transfer of proteins into and across the cell membrane, serving as an ATP-driven molecular motor driving the stepwise translocation of polypeptide chains across the membrane. The chain is Protein translocase subunit SecA from Finegoldia magna (strain ATCC 29328 / DSM 20472 / WAL 2508) (Peptostreptococcus magnus).